The primary structure comprises 177 residues: NADH-quinone oxidoreductase subunit B (177 aa).

[4Fe-4S] cluster contacts are provided by C56, C57, C121, and C151.

This sequence belongs to the complex I 20 kDa subunit family. NDH-1 is composed of 14 different subunits. Subunits NuoB, C, D, E, F, and G constitute the peripheral sector of the complex. Requires [4Fe-4S] cluster as cofactor.

The protein resides in the cell inner membrane. It carries out the reaction a quinone + NADH + 5 H(+)(in) = a quinol + NAD(+) + 4 H(+)(out). NDH-1 shuttles electrons from NADH, via FMN and iron-sulfur (Fe-S) centers, to quinones in the respiratory chain. Couples the redox reaction to proton translocation (for every two electrons transferred, four hydrogen ions are translocated across the cytoplasmic membrane), and thus conserves the redox energy in a proton gradient. This Jannaschia sp. (strain CCS1) protein is NADH-quinone oxidoreductase subunit B.